Here is a 529-residue protein sequence, read N- to C-terminus: DEP domain-containing protein 1B (529 aa).

One can recognise a DEP domain in the interval 24 to 108; sequence FRAGMPLRKH…DDGHLYRFPP (85 aa). Residues 192-393 enclose the Rho-GAP domain; it reads ARLQKVLGLD…FLMDNYQEIL (202 aa).

The chain is DEP domain-containing protein 1B (DEPDC1B) from Gallus gallus (Chicken).